Consider the following 366-residue polypeptide: Beta sliding clamp (366 aa).

It belongs to the beta sliding clamp family. Forms a ring-shaped head-to-tail homodimer around DNA which binds and tethers DNA polymerases and other proteins to the DNA. The DNA replisome complex has a single clamp-loading complex (3 tau and 1 each of delta, delta', psi and chi subunits) which binds 3 Pol III cores (1 core on the leading strand and 2 on the lagging strand) each with a beta sliding clamp dimer. Additional proteins in the replisome are other copies of gamma, psi and chi, Ssb, DNA helicase and RNA primase.

The protein localises to the cytoplasm. Functionally, confers DNA tethering and processivity to DNA polymerases and other proteins. Acts as a clamp, forming a ring around DNA (a reaction catalyzed by the clamp-loading complex) which diffuses in an ATP-independent manner freely and bidirectionally along dsDNA. Initially characterized for its ability to contact the catalytic subunit of DNA polymerase III (Pol III), a complex, multichain enzyme responsible for most of the replicative synthesis in bacteria; Pol III exhibits 3'-5' exonuclease proofreading activity. The beta chain is required for initiation of replication as well as for processivity of DNA replication. This chain is Beta sliding clamp (dnaN), found in Chlamydia muridarum (strain MoPn / Nigg).